We begin with the raw amino-acid sequence, 284 residues long: Tropomyosin, smooth muscle/fibroblast CTM1 (284 aa).

Residues 1 to 284 (MEAIKKKMTM…DVTLQGIGDL (284 aa)) adopt a coiled-coil conformation. A disordered region spans residues 18-38 (AIDRAEQAETDKKSAEDKATG).

It belongs to the tropomyosin family. As to quaternary structure, homodimer. As to expression, predominantly expressed in body wall muscle and heart, low in intestine, ovary and larval tail muscle.

The function of tropomyosin in smooth muscle and non-muscle cells is not clear. This chain is Tropomyosin, smooth muscle/fibroblast CTM1 (CTM1), found in Ciona intestinalis (Transparent sea squirt).